The following is a 701-amino-acid chain: Polyphosphate kinase (701 aa).

Asn-45 is a binding site for ATP. Arg-373 and Arg-403 together coordinate Mg(2+). A PLD phosphodiesterase 1 domain is found at 428–462; it reads PGMKIHAKLLLITRKEGDEFVRYAHIGTGNFHERT. His-433 serves as the catalytic Phosphohistidine intermediate. Residues Tyr-466, Arg-562, and His-590 each coordinate ATP. The region spanning 585–615 is the PLD phosphodiesterase 2 domain; that stretch reads DRFLEHPRVLVVHNDGNPQVFISSADWMERN.

The protein belongs to the polyphosphate kinase 1 (PPK1) family. Mg(2+) is required as a cofactor. Post-translationally, an intermediate of this reaction is the autophosphorylated ppk in which a phosphate is covalently linked to a histidine residue through a N-P bond.

The catalysed reaction is [phosphate](n) + ATP = [phosphate](n+1) + ADP. Functionally, catalyzes the reversible transfer of the terminal phosphate of ATP to form a long-chain polyphosphate (polyP). The polypeptide is Polyphosphate kinase (Vibrio cholerae serotype O1 (strain ATCC 39315 / El Tor Inaba N16961)).